We begin with the raw amino-acid sequence, 391 residues long: MMITKQSYQKFALMRVFVFSLSAFIFNTTEFVPVALLSDIAKSFEMESATVGLMITAYAWVVSLGSLPLMLLSAKIERKRLLLFLFALFILSHILSALAWNFWVLLLSRMGIAFTHSIFWSITASLVIRVAPRNKKQQALGLLALGSSLAMILGLPLGRIIGQMLDWRSTFGVIGGVATLIALLMWKLLPHLPSRNAGTLASVPILMKRPLLMGIYLLVIMVISGHFTTYSYIEPFIIQISQFSPDITTLMLFVFGLAGVAGSFLFSRLYAKNSRKFIAFAMVLVICPQLLLFVFKNLEWVIFLQIFLWGIGITSLTIALQMRVLQLAPDATDVASAIFSGSYNVGIGSGALFGSIVIHQLGLEYIGFVGGALGLLALFWLRFITIKFKKT.

12 consecutive transmembrane segments (helical) span residues 16–36 (VFVF…PVAL), 51–71 (VGLM…PLML), 82–102 (LLFL…AWNF), 110–130 (MGIA…VIRV), 138–158 (QALG…LPLG), 170–190 (TFGV…KLLP), 210–230 (PLLM…FTTY), 247–267 (ITTL…FLFS), 277–297 (FIAF…VFKN), 300–320 (WVIF…TIAL), 338–358 (IFSG…SIVI), and 361–381 (LGLE…LFWL).

It belongs to the major facilitator superfamily. SotB (TC 2.A.1.2) family.

Its subcellular location is the cell inner membrane. Involved in the efflux of sugars. The physiological role may be the reduction of the intracellular concentration of toxic sugars or sugar metabolites. This Helicobacter pylori (strain HPAG1) protein is Probable sugar efflux transporter.